A 233-amino-acid chain; its full sequence is ATP-dependent Clp protease proteolytic subunit 1 (233 aa).

S116 serves as the catalytic Nucleophile. H141 is an active-site residue.

The protein belongs to the peptidase S14 family. In terms of assembly, fourteen ClpP subunits assemble into 2 heptameric rings which stack back to back to give a disk-like structure with a central cavity, resembling the structure of eukaryotic proteasomes.

The protein resides in the cytoplasm. The catalysed reaction is Hydrolysis of proteins to small peptides in the presence of ATP and magnesium. alpha-casein is the usual test substrate. In the absence of ATP, only oligopeptides shorter than five residues are hydrolyzed (such as succinyl-Leu-Tyr-|-NHMec, and Leu-Tyr-Leu-|-Tyr-Trp, in which cleavage of the -Tyr-|-Leu- and -Tyr-|-Trp bonds also occurs).. Functionally, cleaves peptides in various proteins in a process that requires ATP hydrolysis. Has a chymotrypsin-like activity. Plays a major role in the degradation of misfolded proteins. This is ATP-dependent Clp protease proteolytic subunit 1 from Salinibacter ruber (strain DSM 13855 / M31).